Consider the following 467-residue polypeptide: tRNA dimethylallyltransferase (467 aa).

The transit peptide at 1–47 directs the protein to the mitochondrion; the sequence is MAAAAAARAVPVSSGFRGLRRTLPLVVILGATGTGKSTLALQLGQRL. Residue 32–37 participates in dimethylallyl diphosphate binding; that stretch reads TGTGKS. Interaction with substrate tRNA stretches follow at residues 55–58 and 183–187; these read DSMQ and RKVAR. Residues 221–230 are core aggregation region; it reads FPNPCILWLH. An interaction with isopentenylpyrophosphate transferase region spans residues 233 to 255; it reads QAVLDERLDKRVDDMLAAGLLEE. Interaction with substrate tRNA stretches follow at residues 281–283 and 313–331; these read QSI and ALKQ…WVKN. The segment at 395–425 adopts a Matrin-type zinc-finger fold; it reads HMCDLCDRIIIGDREWAAHLKSKSHLHQLKK. The segment at 432–467 is disordered; that stretch reads DAVSATGSQSNSPDCDPERIEGESSGQHNQELKASV. Phosphoserine is present on residues Ser443 and Ser455.

The protein belongs to the IPP transferase family.

The protein resides in the mitochondrion. It is found in the cytoplasm. It localises to the nucleus. It carries out the reaction adenosine(37) in tRNA + dimethylallyl diphosphate = N(6)-dimethylallyladenosine(37) in tRNA + diphosphate. Functionally, catalyzes the transfer of a dimethylallyl group onto the adenine at position 37 of both cytosolic and mitochondrial tRNAs, leading to the formation of N6-(dimethylallyl)adenosine (i6A37). Mediates modification of a limited subset of tRNAs: tRNA(Ser)(AGA), tRNA(Ser)(CGA), tRNA(Ser)(UGA), as well as partial modification of the selenocysteine tRNA(Ser)(UCA). TRIT1 is therefore required for selenoprotein expression. In Mus musculus (Mouse), this protein is tRNA dimethylallyltransferase (Trit1).